The primary structure comprises 174 residues: Large ribosomal subunit protein bL12cz (174 aa).

A chloroplast-targeting transit peptide spans 1-45 (MASTTFSSAFSILSLPSSSPSPPPSPPRTLPVANRRRRAAAVAST). The interval 1-46 (MASTTFSSAFSILSLPSSSPSPPPSPPRTLPVANRRRRAAAVASTA) is disordered. Over residues 7–18 (SSAFSILSLPSS) the composition is skewed to low complexity. The span at 19–29 (SPSPPPSPPRT) shows a compositional bias: pro residues.

Belongs to the bacterial ribosomal protein bL12 family.

The protein localises to the plastid. The protein resides in the chloroplast. The protein is Large ribosomal subunit protein bL12cz (RPL12-1) of Secale cereale (Rye).